Reading from the N-terminus, the 677-residue chain is Histidine ammonia-lyase (677 aa).

The segment at residues 269–271 (CSG) is a cross-link (5-imidazolinone (Cys-Gly)). Ser270 is subject to 2,3-didehydroalanine (Ser).

The protein belongs to the PAL/histidase family. Contains an active site 4-methylidene-imidazol-5-one (MIO), which is formed autocatalytically by cyclization and dehydration of residues Cys-Ser-Gly.

It catalyses the reaction L-histidine = trans-urocanate + NH4(+). Its pathway is amino-acid degradation; L-histidine degradation into L-glutamate; N-formimidoyl-L-glutamate from L-histidine: step 1/3. The sequence is that of Histidine ammonia-lyase from Caenorhabditis elegans.